Consider the following 323-residue polypeptide: tRNA U34 carboxymethyltransferase (323 aa).

Carboxy-S-adenosyl-L-methionine contacts are provided by residues K91, W105, K110, G130, 181–182, M196, Y200, and R315; that span reads IE.

It belongs to the class I-like SAM-binding methyltransferase superfamily. CmoB family. In terms of assembly, homotetramer.

It catalyses the reaction carboxy-S-adenosyl-L-methionine + 5-hydroxyuridine(34) in tRNA = 5-carboxymethoxyuridine(34) in tRNA + S-adenosyl-L-homocysteine + H(+). Catalyzes carboxymethyl transfer from carboxy-S-adenosyl-L-methionine (Cx-SAM) to 5-hydroxyuridine (ho5U) to form 5-carboxymethoxyuridine (cmo5U) at position 34 in tRNAs. This Yersinia pseudotuberculosis serotype IB (strain PB1/+) protein is tRNA U34 carboxymethyltransferase.